The chain runs to 150 residues: Transcriptional regulator MraZ (150 aa).

2 consecutive SpoVT-AbrB domains span residues 7–55 (SHAI…PEPE) and 84–127 (AALM…SEES).

It belongs to the MraZ family. In terms of assembly, forms oligomers.

Its subcellular location is the cytoplasm. The protein resides in the nucleoid. The chain is Transcriptional regulator MraZ from Marinobacter nauticus (strain ATCC 700491 / DSM 11845 / VT8) (Marinobacter aquaeolei).